The following is a 780-amino-acid chain: Calpain clp-1 (780 aa).

Basic and acidic residues predominate over residues 269–282; the sequence is DVDPFVRPGPDPDR. Positions 269–300 are disordered; sequence DVDPFVRPGPDPDRGGGGSGPSPISPRPTTEP. The Calpain catalytic domain occupies 316–611; the sequence is LFEDPQFLAN…FEKMEICNLG (296 aa). Catalysis depends on residues C371, H527, and N551.

Belongs to the peptidase C2 family. In terms of tissue distribution, expressed in muscle and neuronal tissues. Expressed in the ventral and dorsal nerve cord, intestinal and hypodermal tissues.

It is found in the cytoplasm. The protein localises to the myofibril. The protein resides in the sarcomere. Its subcellular location is the m line. Calcium-regulated non-lysosomal thiol-protease which catalyzes limited proteolysis of substrates. Required for assembly and maintenance of integrin attachment complexes which are essential for maintenance of adult muscle. Proteolytic activity is activated in response to increased intracellular Ca(2+) levels during cell degeneration and promotes necrotic cell death. In Caenorhabditis elegans, this protein is Calpain clp-1.